The primary structure comprises 564 residues: Septation ring formation regulator EzrA (564 aa).

Residues 1–4 (MVLY) lie on the Extracellular side of the membrane. The chain crosses the membrane as a helical span at residues 5 to 23 (IILAIIVIILIAVGVLFYL). The Cytoplasmic portion of the chain corresponds to 24–564 (RSNKRQIIEK…KHIEEEVIKQ (541 aa)). 5 coiled-coil regions span residues 99 to 138 (SFNA…YKDN), 190 to 223 (DGNY…LIRE), 271 to 300 (LISR…LIEH), 350 to 435 (VRQF…RRLL), and 471 to 550 (VKQL…ESVE).

Belongs to the EzrA family.

It is found in the cell membrane. Its function is as follows. Negative regulator of FtsZ ring formation; modulates the frequency and position of FtsZ ring formation. Inhibits FtsZ ring formation at polar sites. Interacts either with FtsZ or with one of its binding partners to promote depolymerization. In Staphylococcus aureus (strain Mu3 / ATCC 700698), this protein is Septation ring formation regulator EzrA.